Here is a 1035-residue protein sequence, read N- to C-terminus: Tyrosine-protein kinase-like otk (1035 aa).

The first 23 residues, 1-23, serve as a signal peptide directing secretion; it reads MDMDVMMISMCILASTLMAPGWA. 5 consecutive Ig-like C2-type domains span residues 24–109, 110–199, 251–365, 368–464, and 469–559; these read STSG…REAS, PPAK…RVMS, PEDL…APLN, PGLL…VSIN, and PKFS…VQLV. The Extracellular segment spans residues 24-582; sequence STSGFLRVPQ…GGDGFLVTRA (559 aa). 5 disulfides stabilise this stretch: Cys47/Cys96, Cys138/Cys188, Cys276/Cys354, Cys399/Cys448, and Cys491/Cys543. Asn336, Asn418, Asn430, Asn445, Asn513, and Asn525 each carry an N-linked (GlcNAc...) asparagine glycan. Residues 583–603 form a helical membrane-spanning segment; that stretch reads VLITMTVALAYIVLVVGLMLW. At 604–1035 the chain is on the cytoplasmic side; the sequence is CRYRRQARKA…SKAMQSVAEK (432 aa). Disordered regions lie at residues 623-683 and 721-775; these read AGGD…KSVY and AQSD…KEEE. Residues 658–676 are compositionally biased toward polar residues; sequence KSNGDAQKSDDTACSQQSR. Ser681 bears the Phosphoserine mark. The region spanning 693-1029 is the Protein kinase; inactive domain; sequence LSELLQIGRG…QLGSALSKAM (337 aa). Residues 723–734 are compositionally biased toward basic and acidic residues; it reads SDKDADTEKQHS. Over residues 766–775 the composition is skewed to acidic residues; that stretch reads DDIEEIKEEE.

Belongs to the protein kinase superfamily. Tyr protein kinase family. Insulin receptor subfamily. As to quaternary structure, interacts with plexA; component of a receptor complex that mediates the repulsive signaling in response to Semaphorin ligands.

It localises to the cell membrane. Its function is as follows. Acts as a calcium-dependent, homophilic cell adhesion molecule that regulates neural recognition during the development of the nervous system. Component of the repulsive Plexin signaling response to regulate motor axon guidance at the embryonic stage. Also component of a receptor complex that is required in the adult visual system to innervate the lamina layer; specific targeting of R1-R6 axons. The polypeptide is Tyrosine-protein kinase-like otk (Drosophila persimilis (Fruit fly)).